Here is a 249-residue protein sequence, read N- to C-terminus: Probable transcriptional regulator ycf27 (249 aa).

The 114-residue stretch at 13–126 folds into the Response regulatory domain; sequence HLLIVDDENN…ELEARIQSIL (114 aa). The residue at position 62 (Asp62) is a 4-aspartylphosphate. A DNA-binding region (H-T-H motif) is located at residues 82–100; sequence DIPIIMLTALEDVLDKVTG. A DNA-binding region (ompR/PhoB-type) is located at residues 142–246; the sequence is INLFKTGSLN…ARGTGYLCRK (105 aa).

It is found in the plastid. The protein localises to the chloroplast. Its function is as follows. Probable promoter-specific protein mediating the interaction between DNA and RNA polymerase. This is Probable transcriptional regulator ycf27 (ycf27) from Cyanidium caldarium (Red alga).